We begin with the raw amino-acid sequence, 421 residues long: CinA-like protein (421 aa).

It belongs to the CinA family.

In Mycobacterium sp. (strain JLS), this protein is CinA-like protein.